The chain runs to 329 residues: Ubiquinol oxidase 1c, mitochondrial (329 aa).

Residues 1 to 45 (MITTLLRRSLLDASKQATSINGILFHQLAPAKYFRVPAVGGLRDF) constitute a mitochondrion transit peptide. A helical membrane pass occupies residues 154 to 174 (AIMLETVAAVPGMVGGMLMHF). The Fe cation site is built by Glu-158, Glu-197, and His-200. A helical transmembrane segment spans residues 216–236 (ALVISVQGVFFNAYLIGYIIS). Fe cation is bound by residues Glu-248, Glu-299, and His-302.

This sequence belongs to the alternative oxidase family. As to quaternary structure, homodimer; disulfide-linked. It depends on Fe cation as a cofactor. In terms of tissue distribution, expressed in roots, stems, leaves, cotyledons and flowers. High expression in stamens.

The protein resides in the mitochondrion inner membrane. It carries out the reaction 2 a ubiquinol + O2 = 2 a ubiquinone + 2 H2O. Functionally, catalyzes the cyanide-resistant oxidation of ubiquinol and the reduction of molecular oxygen to water, but does not translocate protons and consequently is not linked to oxidative phosphorylation. May increase respiration when the cytochrome respiratory pathway is restricted, or in response to low temperatures. The sequence is that of Ubiquinol oxidase 1c, mitochondrial (AOX1C) from Arabidopsis thaliana (Mouse-ear cress).